Reading from the N-terminus, the 946-residue chain is Ent-kaur-16-ene synthase (946 aa).

Positions 656, 660, 839, 840, 843, and 847 each coordinate Mg(2+). Residues 656–660 (DEFFE) carry the DEXXE motif motif.

It belongs to the terpene synthase family. Requires Mg(2+) as cofactor.

It catalyses the reaction ent-copalyl diphosphate = ent-kaur-16-ene + diphosphate. The catalysed reaction is (2E,6E,10E)-geranylgeranyl diphosphate = ent-copalyl diphosphate. It functions in the pathway plant hormone biosynthesis; gibberellin biosynthesis. Its function is as follows. Catalyzes the conversion of geranylgeranyl diphosphate to the gibberellin precursor ent-kaurene diphosphate in a two step process. The protein is Ent-kaur-16-ene synthase of Phaeosphaeria sp. (strain L487).